A 1163-amino-acid chain; its full sequence is Integrin alpha-X (1163 aa).

Positions 1–19 are cleaved as a signal peptide; sequence MTRTRAALLLFTALATSLG. Residues 20–1107 are Extracellular-facing; that stretch reads FNLDTEELTA…EKYKVHNPTP (1088 aa). 2 FG-GAP repeats span residues 23–78 and 79–138; these read DTEE…ACEP and IGLQ…TQRL. N-linked (GlcNAc...) asparagine glycosylation occurs at N61. A disulfide bridge connects residues C69 and C76. N-linked (GlcNAc...) asparagine glycosylation occurs at N89. 2 cysteine pairs are disulfide-bonded: C108–C126 and C116–C145. Residues D157, S159, S161, and D259 each coordinate Mg(2+). One can recognise a VWFA domain in the interval 165 to 339; it reads RNFATMMNFV…KEKIFAIEGT (175 aa). FG-GAP repeat units follow at residues 340–391, 392–443, 444–504, 507–565, and 570–630; these read ETTS…PTFI, NMSQ…SRQW, RMKA…WRRW, DAVL…PSIS, and QRIA…FIPA. N-linked (GlcNAc...) asparagine glycosylation occurs at N392. Ca(2+)-binding residues include D466, D468, D470, and D474. The cysteines at positions 495 and 506 are disulfide-linked. The Ca(2+) site is built by D530, N532, D534, D538, D593, D597, and D601. 2 disulfide bridges follow: C639-C722 and C655-C712. N697 and N735 each carry an N-linked (GlcNAc...) asparagine glycan. Cystine bridges form between C771-C777 and C848-C863. 2 N-linked (GlcNAc...) asparagine glycosylation sites follow: N899 and N939. 2 disulfide bridges follow: C998–C1022 and C1027–C1032. N-linked (GlcNAc...) asparagine glycosylation occurs at N1050. A helical transmembrane segment spans residues 1108-1128; sequence LIVGSSIGGLLLLALITAVLY. At 1129-1163 the chain is on the cytoplasmic side; that stretch reads KVGFFKRQYKEMMEEANGQIAPENGTQTPSPPSEK. A GFFKR motif motif is present at residues 1131-1135; sequence GFFKR.

Belongs to the integrin alpha chain family. Heterodimer of an alpha and a beta subunit. Alpha-X associates with beta-2. As to expression, predominantly expressed in monocytes and granulocytes.

It localises to the membrane. Functionally, integrin alpha-X/beta-2 is a receptor for fibrinogen. It recognizes the sequence G-P-R in fibrinogen. It mediates cell-cell interaction during inflammatory responses. It is especially important in monocyte adhesion and chemotaxis. This Homo sapiens (Human) protein is Integrin alpha-X (ITGAX).